The primary structure comprises 69 residues: Neurotoxin Cex5 (69 aa).

A1 is a signal peptide. One can recognise an LCN-type CS-alpha/beta domain in the interval 2-67; that stretch reads KDGYLVSKST…TYPIPGKSCG (66 aa). Intrachain disulfides connect C13/C66, C17/C42, C26/C47, and C30/C49. Position 66 is a cysteine amide (C66). Positions 67–69 are excised as a propeptide; sequence GKK.

Belongs to the long (4 C-C) scorpion toxin superfamily. Sodium channel inhibitor family. Beta subfamily. Expressed by the venom gland.

The protein localises to the secreted. In terms of biological role, beta toxins bind voltage-independently at site-4 of sodium channels (Nav) and shift the voltage of activation toward more negative potentials thereby affecting sodium channel activation and promoting spontaneous and repetitive firing. This chain is Neurotoxin Cex5, found in Centruroides exilicauda (Bark scorpion).